The following is a 561-amino-acid chain: DNA ligase (561 aa).

Glu247 lines the ATP pocket. Lys249 functions as the N6-AMP-lysine intermediate in the catalytic mechanism. Positions 254, 269, 299, 339, 414, and 420 each coordinate ATP.

The protein belongs to the ATP-dependent DNA ligase family. Monomer. It depends on Mg(2+) as a cofactor.

It carries out the reaction ATP + (deoxyribonucleotide)n-3'-hydroxyl + 5'-phospho-(deoxyribonucleotide)m = (deoxyribonucleotide)n+m + AMP + diphosphate.. Functionally, DNA ligase that seals nicks in double-stranded DNA during DNA replication, DNA recombination and DNA repair. The sequence is that of DNA ligase from Pyrococcus furiosus (strain ATCC 43587 / DSM 3638 / JCM 8422 / Vc1).